The sequence spans 142 residues: Transcription antitermination protein NusB (142 aa).

This sequence belongs to the NusB family.

Functionally, involved in transcription antitermination. Required for transcription of ribosomal RNA (rRNA) genes. Binds specifically to the boxA antiterminator sequence of the ribosomal RNA (rrn) operons. This chain is Transcription antitermination protein NusB, found in Actinobacillus succinogenes (strain ATCC 55618 / DSM 22257 / CCUG 43843 / 130Z).